The following is a 141-amino-acid chain: Hemoglobin subunit alpha (141 aa).

The Globin domain occupies 1–141; it reads VLSPADKTNV…VSTVLTSKYR (141 aa). A Phosphoserine modification is found at Ser3. Lys7 carries the N6-succinyllysine modification. A Phosphothreonine modification is found at Thr8. Lys11 carries the post-translational modification N6-succinyllysine. Phosphoserine is present on Ser35. Lys40 carries the post-translational modification N6-succinyllysine. At Ser49 the chain carries Phosphoserine. Residue His58 coordinates O2. His87 serves as a coordination point for heme b. Ser102 bears the Phosphoserine mark. Phosphothreonine is present on Thr108. Ser124 is modified (phosphoserine). Residues Thr134 and Thr137 each carry the phosphothreonine modification. Ser138 carries the phosphoserine modification.

The protein belongs to the globin family. In terms of assembly, heterotetramer of two alpha chains and two beta chains. In terms of tissue distribution, red blood cells.

In terms of biological role, involved in oxygen transport from the lung to the various peripheral tissues. Hemopressin acts as an antagonist peptide of the cannabinoid receptor CNR1. Hemopressin-binding efficiently blocks cannabinoid receptor CNR1 and subsequent signaling. This Eulemur fulvus fulvus (Brown lemur) protein is Hemoglobin subunit alpha (HBA).